Here is a 209-residue protein sequence, read N- to C-terminus: ATP-dependent Clp protease proteolytic subunit (209 aa).

The active-site Nucleophile is S107. H132 is an active-site residue.

This sequence belongs to the peptidase S14 family. In terms of assembly, fourteen ClpP subunits assemble into 2 heptameric rings which stack back to back to give a disk-like structure with a central cavity, resembling the structure of eukaryotic proteasomes.

The protein resides in the cytoplasm. The enzyme catalyses Hydrolysis of proteins to small peptides in the presence of ATP and magnesium. alpha-casein is the usual test substrate. In the absence of ATP, only oligopeptides shorter than five residues are hydrolyzed (such as succinyl-Leu-Tyr-|-NHMec, and Leu-Tyr-Leu-|-Tyr-Trp, in which cleavage of the -Tyr-|-Leu- and -Tyr-|-Trp bonds also occurs).. Functionally, cleaves peptides in various proteins in a process that requires ATP hydrolysis. Has a chymotrypsin-like activity. Plays a major role in the degradation of misfolded proteins. In Methylobacterium nodulans (strain LMG 21967 / CNCM I-2342 / ORS 2060), this protein is ATP-dependent Clp protease proteolytic subunit.